Reading from the N-terminus, the 524-residue chain is Rho guanine nucleotide exchange factor 3 (524 aa).

Positions 75-98 are disordered; it reads SDSRPDLFSPRPWSRNTPAANTKR. The DH domain maps to 121 to 303; the sequence is IKRQEAIFEL…IQGIVAEINI (183 aa). A PH domain is found at 290–448; it reads AINIIQGIVA…QWLNCIRQAK (159 aa).

It is found in the cytoplasm. In terms of biological role, acts as a guanine nucleotide exchange factor (GEF) for RhoA and RhoB GTPases. In Gallus gallus (Chicken), this protein is Rho guanine nucleotide exchange factor 3 (Arhgef3).